A 213-amino-acid chain; its full sequence is MPVHEIRHPLIRHKLGIMRRADLSTKSFRELSQEVAALLTYEATKDMPLAPASVEGWCGTVEVDKITGKKVTVVPILRAGIGMLDGVLSLIPGAKVSVVGVARNEETLQAHTYLERLVGELDQRLALIVDPMLATGGSMVAAIDMLKRAGCREIRALTLVSAPEGIDAVLKAHPDVQIYTASIDQGLNENGYIMPGLGDAGDRIFGTTQKHAE.

5-phospho-alpha-D-ribose 1-diphosphate contacts are provided by residues Arg-78, Arg-103, and 130–138; that span reads DPMLATGGS. Uracil is bound by residues Ile-193 and 198 to 200; that span reads GDA. Asp-199 contacts 5-phospho-alpha-D-ribose 1-diphosphate.

It belongs to the UPRTase family. It depends on Mg(2+) as a cofactor.

It catalyses the reaction UMP + diphosphate = 5-phospho-alpha-D-ribose 1-diphosphate + uracil. Its pathway is pyrimidine metabolism; UMP biosynthesis via salvage pathway; UMP from uracil: step 1/1. With respect to regulation, allosterically activated by GTP. Functionally, catalyzes the conversion of uracil and 5-phospho-alpha-D-ribose 1-diphosphate (PRPP) to UMP and diphosphate. In Bordetella pertussis (strain Tohama I / ATCC BAA-589 / NCTC 13251), this protein is Uracil phosphoribosyltransferase.